A 154-amino-acid chain; its full sequence is NADPH-dependent 7-cyano-7-deazaguanine reductase (154 aa).

The active-site Thioimide intermediate is the C52. The active-site Proton donor is D59. Residues 74-76 and 93-94 contribute to the substrate site; these read VES and HE.

Belongs to the GTP cyclohydrolase I family. QueF type 1 subfamily.

Its subcellular location is the cytoplasm. It carries out the reaction 7-aminomethyl-7-carbaguanine + 2 NADP(+) = 7-cyano-7-deazaguanine + 2 NADPH + 3 H(+). It participates in tRNA modification; tRNA-queuosine biosynthesis. Catalyzes the NADPH-dependent reduction of 7-cyano-7-deazaguanine (preQ0) to 7-aminomethyl-7-deazaguanine (preQ1). This chain is NADPH-dependent 7-cyano-7-deazaguanine reductase, found in Rhizobium rhizogenes (strain K84 / ATCC BAA-868) (Agrobacterium radiobacter).